Reading from the N-terminus, the 663-residue chain is UvrABC system protein B (663 aa).

Residues 1-10 (MIDKRDDKPF) are compositionally biased toward basic and acidic residues. Positions 1-23 (MIDKRDDKPFKLKSKYKPSGDQP) are disordered. The Helicase ATP-binding domain occupies 31–418 (DNIEGGEKAQ…TNTIIEQIIR (388 aa)). Residue 44 to 51 (GATGTGKT) participates in ATP binding. Positions 97–120 (YYDYYQPEAYVPSSDTYIEKDSSV) match the Beta-hairpin motif. Residues 435 to 601 (QMDDLLGEIN…TIKKDIRGLI (167 aa)) form the Helicase C-terminal domain. In terms of domain architecture, UVR spans 627 to 662 (KEAINALQKQMQEAAELLDFELAAQMRDLILELKLM).

Belongs to the UvrB family. Forms a heterotetramer with UvrA during the search for lesions. Interacts with UvrC in an incision complex.

It localises to the cytoplasm. In terms of biological role, the UvrABC repair system catalyzes the recognition and processing of DNA lesions. A damage recognition complex composed of 2 UvrA and 2 UvrB subunits scans DNA for abnormalities. Upon binding of the UvrA(2)B(2) complex to a putative damaged site, the DNA wraps around one UvrB monomer. DNA wrap is dependent on ATP binding by UvrB and probably causes local melting of the DNA helix, facilitating insertion of UvrB beta-hairpin between the DNA strands. Then UvrB probes one DNA strand for the presence of a lesion. If a lesion is found the UvrA subunits dissociate and the UvrB-DNA preincision complex is formed. This complex is subsequently bound by UvrC and the second UvrB is released. If no lesion is found, the DNA wraps around the other UvrB subunit that will check the other stand for damage. The polypeptide is UvrABC system protein B (Streptococcus pyogenes serotype M28 (strain MGAS6180)).